Consider the following 195-residue polypeptide: Probable nicotinate-nucleotide adenylyltransferase (195 aa).

It belongs to the NadD family.

It catalyses the reaction nicotinate beta-D-ribonucleotide + ATP + H(+) = deamido-NAD(+) + diphosphate. It functions in the pathway cofactor biosynthesis; NAD(+) biosynthesis; deamido-NAD(+) from nicotinate D-ribonucleotide: step 1/1. Catalyzes the reversible adenylation of nicotinate mononucleotide (NaMN) to nicotinic acid adenine dinucleotide (NaAD). This Gluconobacter oxydans (strain 621H) (Gluconobacter suboxydans) protein is Probable nicotinate-nucleotide adenylyltransferase.